We begin with the raw amino-acid sequence, 275 residues long: 2,3,4,5-tetrahydropyridine-2,6-dicarboxylate N-succinyltransferase (275 aa).

Substrate-binding residues include R108 and D145.

It belongs to the transferase hexapeptide repeat family. As to quaternary structure, homotrimer.

The protein localises to the cytoplasm. It catalyses the reaction (S)-2,3,4,5-tetrahydrodipicolinate + succinyl-CoA + H2O = (S)-2-succinylamino-6-oxoheptanedioate + CoA. It functions in the pathway amino-acid biosynthesis; L-lysine biosynthesis via DAP pathway; LL-2,6-diaminopimelate from (S)-tetrahydrodipicolinate (succinylase route): step 1/3. This chain is 2,3,4,5-tetrahydropyridine-2,6-dicarboxylate N-succinyltransferase, found in Maricaulis maris (strain MCS10) (Caulobacter maris).